The sequence spans 704 residues: Mannan-binding lectin serine protease 1 (704 aa).

The N-terminal stretch at 1-24 is a signal peptide; the sequence is MRFLSFWRLLLYHALCLALPEVSA. The region spanning 25-143 is the CUB 1 domain; it reads HTVELNEMFG…TGFDAHYMAV (119 aa). Residues 25 to 189 form a homodimerization region; sequence HTVELNEMFG…HTDNRTCRVE (165 aa). Positions 25-189 are interaction with MBL2; it reads HTVELNEMFG…HTDNRTCRVE (165 aa). An interaction with FCN2 region spans residues 25–283; sequence HTVELNEMFG…STQTHSVQIL (259 aa). Residues 25 to 305 form an interaction with MBL1 region; it reads HTVELNEMFG…RLSYRAAGNE (281 aa). A glycan (N-linked (GlcNAc...) asparagine) is linked at Asn-54. The Ca(2+) site is built by Glu-73, Asp-81, Asp-126, Ser-128, Asp-144, Val-145, and Glu-147. A disulfide bridge links Cys-78 with Cys-96. The region spanning 144 to 187 is the EGF-like; calcium-binding domain; sequence DVDECKEREDEELSCDHYCHNYIGGYYCSCRFGYILHTDNRTCR. Cystine bridges form between Cys-148–Cys-162, Cys-158–Cys-171, Cys-173–Cys-186, and Cys-190–Cys-217. Ca(2+)-binding residues include Asn-164, Tyr-165, and Gly-168. Asn-164 carries the post-translational modification (3R)-3-hydroxyasparagine. N-linked (GlcNAc...) asparagine glycosylation is present at Asn-183. One can recognise a CUB 2 domain in the interval 190 to 302; it reads CSGNLFTQRT…RGWRLSYRAA (113 aa). Residues Glu-240, Asp-250, Asp-287, and Ser-289 each contribute to the Ca(2+) site. Cys-247 and Cys-265 are oxidised to a cystine. Sushi domains are found at residues 304-369 and 370-439; these read NECP…TCKI and VDCG…TCLP. Cystine bridges form between Cys-306/Cys-354, Cys-334/Cys-367, Cys-372/Cys-419, Cys-402/Cys-437, Cys-441/Cys-577, Cys-480/Cys-496, Cys-619/Cys-636, and Cys-647/Cys-677. 2 N-linked (GlcNAc...) asparagine glycosylation sites follow: Asn-390 and Asn-412. Residues 454 to 701 enclose the Peptidase S1 domain; it reads IFNGRPAQKG…NKDWIQRITG (248 aa). Active-site charge relay system residues include His-495 and Asp-557. Ser-651 serves as the catalytic Charge relay system.

This sequence belongs to the peptidase S1 family. In terms of assembly, homodimer. Interacts with the oligomeric lectins MBL2, FCN2 and FCN3; triggers the lectin pathway of complement through activation of C3. Interacts with SERPING1. Interacts with COLEC11; probably triggers the lectin pathway of complement. Post-translationally, the iron and 2-oxoglutarate dependent 3-hydroxylation of aspartate and asparagine is (R) stereospecific within EGF domains. In terms of processing, N-glycosylated. Some N-linked glycan are of the complex-type. Autoproteolytic processing of the proenzyme produces the active enzyme composed on the heavy and the light chain held together by a disulfide bond. Isoform 1 but not isoform 2 is activated through autoproteolytic processing. As to expression, protein of the plasma which is primarily expressed by liver.

It is found in the secreted. Inhibited by SERPING1 and A2M. In terms of biological role, functions in the lectin pathway of complement, which performs a key role in innate immunity by recognizing pathogens through patterns of sugar moieties and neutralizing them. The lectin pathway is triggered upon binding of mannan-binding lectin (MBL) and ficolins to sugar moieties which leads to activation of the associated proteases MASP1 and MASP2. Functions as an endopeptidase and may activate MASP2 or C2 or directly activate C3 the key component of complement reaction. Isoform 2 may have an inhibitory effect on the activation of the lectin pathway of complement or may cleave IGFBP5. Also plays a role in development. The sequence is that of Mannan-binding lectin serine protease 1 (Masp1) from Mus musculus (Mouse).